A 1712-amino-acid polypeptide reads, in one-letter code: Probable ATP-dependent RNA helicase DDX60 (1712 aa).

Residues Leu-772–Lys-939 enclose the Helicase ATP-binding domain. ATP is bound at residue Ala-785–Thr-792. Positions Asp-889–His-892 match the DEVH box motif. The Helicase C-terminal domain maps to Tyr-1226 to Leu-1370.

The protein belongs to the helicase family. Interacts with EXOSC1, EXOSC4, RIGI, IFIH1/MDA5 and DHX58/LGP2. In terms of tissue distribution, brain, lymph node, prostate, stomach, thyroid, tongue, trachea, uterus, skeletal muscle, spleen, kidney, liver and small intestine.

Its subcellular location is the cytoplasm. The catalysed reaction is ATP + H2O = ADP + phosphate + H(+). Functionally, positively regulates RIGI- and IFIH1/MDA5-dependent type I interferon and interferon inducible gene expression in response to viral infection. Binds ssRNA, dsRNA and dsDNA and can promote the binding of RIGI to dsRNA. Exhibits antiviral activity against hepatitis C virus and vesicular stomatitis virus (VSV). This is Probable ATP-dependent RNA helicase DDX60 (DDX60) from Homo sapiens (Human).